Consider the following 358-residue polypeptide: GDSL esterase/lipase At2g30220 (358 aa).

The signal sequence occupies residues 1-22; sequence MYISKTIVFGLFVATLLVSCNA. Asn25 is a glycosylation site (N-linked (GlcNAc...) asparagine). The active-site Nucleophile is Ser40. Asn102 and Asn324 each carry an N-linked (GlcNAc...) asparagine glycan. Catalysis depends on residues Asp332 and His335.

This sequence belongs to the 'GDSL' lipolytic enzyme family.

The protein resides in the secreted. The polypeptide is GDSL esterase/lipase At2g30220 (Arabidopsis thaliana (Mouse-ear cress)).